A 157-amino-acid chain; its full sequence is MFDVLMYLFETYIHTEAELRVDQDKLEQDLTDAGFEREDIYNALLWLEKLADYQEGLAEPMQLASDPLSMRIYTPEECERLDASCRGFLLFLEQIQVLNLETREMVIERVLALDNAEFELDDLKWVILMVLFNIPGCENAYQQMEELLFEVNEGMLH.

Belongs to the Smg family.

This chain is Protein Smg, found in Shigella boydii serotype 4 (strain Sb227).